A 487-amino-acid chain; its full sequence is Zinc finger protein 345 (487 aa).

15 consecutive C2H2-type zinc fingers follow at residues 62–84 (LECK…QRIH), 90–112 (YECK…QRIH), 118–140 (YECN…QRIH), 146–168 (YECK…QIIH), 174–196 (YECK…HRIH), 202–224 (YECK…RRVH), 230–252 (YECK…QRIH), 258–280 (YICN…QRIH), 286–308 (YVCK…QRIH), 314–336 (YECK…QRMH), 342–364 (YECK…QRIH), 370–392 (YECK…QLIH), 398–420 (YECR…QRIH), 426–448 (YECK…QRMH), and 454–476 (YECK…KKNH).

It belongs to the krueppel C2H2-type zinc-finger protein family.

Its subcellular location is the nucleus. Its function is as follows. May be involved in transcriptional regulation. The sequence is that of Zinc finger protein 345 (ZNF345) from Bos taurus (Bovine).